A 205-amino-acid polypeptide reads, in one-letter code: Urease accessory protein UreG (205 aa).

14-21 lines the GTP pocket; it reads GPVGSGKT.

It belongs to the SIMIBI class G3E GTPase family. UreG subfamily. In terms of assembly, homodimer. UreD, UreF and UreG form a complex that acts as a GTP-hydrolysis-dependent molecular chaperone, activating the urease apoprotein by helping to assemble the nickel containing metallocenter of UreC. The UreE protein probably delivers the nickel.

The protein resides in the cytoplasm. In terms of biological role, facilitates the functional incorporation of the urease nickel metallocenter. This process requires GTP hydrolysis, probably effectuated by UreG. The sequence is that of Urease accessory protein UreG from Proteus mirabilis (strain HI4320).